The primary structure comprises 387 residues: Chlorophyll synthase, chloroplastic (387 aa).

The N-terminal 57 residues, 1 to 57 (MTSILNTVSTIHSSRVTSVDRVGVLSLRNSDSVEFTRRRSGFSTLIYESPGRRFVVR), are a transit peptide targeting the chloroplast. The disordered stretch occupies residues 62–81 (DTDKVKSQTPDKAPAGGSSI). The next 7 helical transmembrane spans lie at 182 to 202 (VITQ…ILDV), 210 to 230 (TVFY…APPL), 241 to 261 (FALG…LFGT), 266 to 286 (VVVL…VNDF), 311 to 331 (WICV…LLAS), 336 to 356 (YALA…KYFL), and 364 to 384 (VKYQ…TALA).

It belongs to the UbiA prenyltransferase family. Chlorophyll synthase subfamily. As to expression, low level in flower buds, flowers, stems, leaves, greening cotyledons and immature siliques, but not in mature siliques or seeds.

It localises to the plastid. Its subcellular location is the chloroplast membrane. The catalysed reaction is phytyl diphosphate + chlorophyllide a + H(+) = chlorophyll a + diphosphate. The protein operates within porphyrin-containing compound metabolism; chlorophyll biosynthesis. Its function is as follows. Involved in one of the last steps of the biosynthesis of chlorophyll a. Catalyzes the esterification of chlorophillide a or b with a preference for geranylgeranyldiphosphate (GGPP) rather than for phytyldiphosphate (PhyPP). The sequence is that of Chlorophyll synthase, chloroplastic (CHLG) from Arabidopsis thaliana (Mouse-ear cress).